The chain runs to 263 residues: Putative TATA-binding protein pB263R (263 aa).

It belongs to the asfivirus B263R family.

Functionally, putative TATA-binding protein. This African swine fever virus (isolate Tick/Malawi/Lil 20-1/1983) (ASFV) protein is Putative TATA-binding protein pB263R.